The primary structure comprises 666 residues: Non-receptor tyrosine-protein kinase TNK1 (666 aa).

A phosphoserine mark is found at serine 60 and serine 96. The region spanning 116–377 is the Protein kinase domain; sequence VCRGELLGSG…PSFSHLEGLL (262 aa). Residues 122-130 and lysine 148 contribute to the ATP site; that span reads LGSGCFGVV. Aspartate 245 serves as the catalytic Proton acceptor. 2 positions are modified to phosphoserine: serine 255 and serine 411. The 66-residue stretch at 380-445 folds into the SH3 domain; it reads AGPSEACCVR…PASAVTLADA (66 aa). The interval 446 to 493 is disordered; it reads GGLPATRPVHRGTPARGDQHPGSIDGDRKKANLWDAPPARGQRRNMPL. The residue at position 502 (serine 502) is a Phosphoserine. The segment at 506 to 579 is disordered; the sequence is VLSLGPRPTG…MGMPGARKAA (74 aa). Phosphothreonine is present on threonine 514. Serine 519 is modified (phosphoserine). Over residues 531–541 the composition is skewed to pro residues; sequence QGPPGLPPRPP. The segment covering 542–552 has biased composition (low complexity); sequence LSSSSPQPSQP. Position 582 is a phosphoserine (serine 582).

Belongs to the protein kinase superfamily. Tyr protein kinase family. Interacts with the SH3 domain of PLCG1 via its Pro-rich domain. In terms of processing, autophosphorylated on tyrosine residues. As to expression, expressed in all umbilical cord blood, bone marrow and adult blood cell sub-populations and in several leukemia cell lines. Highly expressed in fetal blood, brain, lung, liver and kidney. Detected at lower levels in adult prostate, testis, ovary, small intestine and colon. Not expressed in adult lung, liver, kidney or brain.

The protein resides in the cytoplasm. The protein localises to the membrane. The catalysed reaction is L-tyrosyl-[protein] + ATP = O-phospho-L-tyrosyl-[protein] + ADP + H(+). Functionally, involved in negative regulation of cell growth. Has tumor suppressor properties. Plays a negative regulatory role in the Ras-MAPK pathway. May function in signaling pathways utilized broadly during fetal development and more selectively in adult tissues and in cells of the lymphohematopoietic system. Could specifically be involved in phospholipid signal transduction. The sequence is that of Non-receptor tyrosine-protein kinase TNK1 from Homo sapiens (Human).